The following is a 363-amino-acid chain: IVLLMVVTSNADRICTGITSSNSPHVVKTATQGEVNVTGVIPLTTTPTKSHFANLKGTQTRGKLCPNCLNCTDLDVALGRPKCMGTIPSAKVSILHEAKPVTSGCFPIMHDRTKIRQLPNLLRGYENIRLSTSDVINAETAPGGPYTVGTSGSCPNITNGEGFFETMAWAIPKNKTAMNPLTVEVPYICTKGEDQITVWGFHSDNETQMVILYGDSKPQKFTSSANGVTTHYVSQIGGFPNQTEDEGLKQSGRIVVDYIVQKPGKTGTIVYQRGVLLPQKVWCASGRSKVIKGSLPLIGEADCLHEKYGGLNKSKPYYTGEHAKAIGNCPIWVKTPLKLANGTKYRPPAKLLKERGFFGAIAG.

A signal peptide spans 1–11 (IVLLMVVTSNA). 8 N-linked (GlcNAc...) asparagine; by host glycosylation sites follow: asparagine 36, asparagine 70, asparagine 156, asparagine 174, asparagine 205, asparagine 241, asparagine 312, and asparagine 341.

Belongs to the influenza viruses hemagglutinin family. As to quaternary structure, homotrimer of disulfide-linked HA1-HA2. In natural infection, inactive HA is matured into HA1 and HA2 outside the cell by one or more trypsin-like, arginine-specific endoprotease secreted by the bronchial epithelial cells. One identified protease that may be involved in this process is secreted in lungs by club cells. Post-translationally, palmitoylated.

Its subcellular location is the virion membrane. The protein resides in the host apical cell membrane. Functionally, binds to sialic acid-containing receptors on the cell surface, bringing about the attachment of the virus particle to the cell. Plays a major role in the determination of host range restriction and virulence. Class I viral fusion protein. Responsible for penetration of the virus into the cell cytoplasm by mediating the fusion of the membrane of the endocytosed virus particle with the endosomal membrane. Low pH in endosomes induce an irreversible conformational change in HA2, releasing the fusion hydrophobic peptide. Several trimers are required to form a competent fusion pore. This chain is Hemagglutinin (HA), found in Homo sapiens (Human).